The following is a 228-amino-acid chain: LHFPL tetraspan subfamily member 2 protein (228 aa).

4 helical membrane-spanning segments follow: residues 11 to 31 (MLWT…FMSA), 102 to 122 (IFLA…VFTM), 132 to 152 (IFNV…LGLI), and 181 to 201 (LGWA…CAVF).

The protein belongs to the LHFP family. Expressed in all tissues and cell lines examined except brain and peripheral blood leukocytes.

It localises to the membrane. Plays a role in female and male fertility. Involved in distal reproductive tract development. The sequence is that of LHFPL tetraspan subfamily member 2 protein from Homo sapiens (Human).